The chain runs to 159 residues: uncharacterized protein (159 aa).

The next 3 membrane-spanning stretches (helical) occupy residues 16 to 36 (IVLPLVQIIHVSGHSFMAFIF), 84 to 104 (VYAGGCLFNLITIFAINLLII), and 112 to 132 (VFFYQFVYFSTYYVFFALLPV).

The protein localises to the cell membrane. This is an uncharacterized protein from Bacillus subtilis (strain 168).